The sequence spans 351 residues: tRNA N6-adenosine threonylcarbamoyltransferase (351 aa).

Histidine 124 and histidine 128 together coordinate Fe cation. Residues 146–150 (LVSGG), aspartate 180, glycine 193, aspartate 197, and asparagine 285 each bind substrate. Position 313 (aspartate 313) interacts with Fe cation.

The protein belongs to the KAE1 / TsaD family. It depends on Fe(2+) as a cofactor.

It is found in the cytoplasm. It catalyses the reaction L-threonylcarbamoyladenylate + adenosine(37) in tRNA = N(6)-L-threonylcarbamoyladenosine(37) in tRNA + AMP + H(+). Functionally, required for the formation of a threonylcarbamoyl group on adenosine at position 37 (t(6)A37) in tRNAs that read codons beginning with adenine. Is involved in the transfer of the threonylcarbamoyl moiety of threonylcarbamoyl-AMP (TC-AMP) to the N6 group of A37, together with TsaE and TsaB. TsaD likely plays a direct catalytic role in this reaction. The sequence is that of tRNA N6-adenosine threonylcarbamoyltransferase from Mycobacterium leprae (strain TN).